The primary structure comprises 240 residues: Guanylate kinase (240 aa).

The Guanylate kinase-like domain occupies 56–236 (GRIFVITGPS…TLNELKSILL (181 aa)). An ATP-binding site is contributed by 63-70 (GPSGVGKS).

Belongs to the guanylate kinase family.

The protein localises to the cytoplasm. The enzyme catalyses GMP + ATP = GDP + ADP. Functionally, essential for recycling GMP and indirectly, cGMP. In Mycoplasma genitalium (strain ATCC 33530 / DSM 19775 / NCTC 10195 / G37) (Mycoplasmoides genitalium), this protein is Guanylate kinase (gmk).